Consider the following 212-residue polypeptide: Pyrrolidone-carboxylate peptidase (212 aa).

Residues Glu-78, Cys-141, and His-165 contribute to the active site.

Belongs to the peptidase C15 family. Homotetramer.

It localises to the cytoplasm. The catalysed reaction is Release of an N-terminal pyroglutamyl group from a polypeptide, the second amino acid generally not being Pro.. In terms of biological role, removes 5-oxoproline from various penultimate amino acid residues except L-proline. This is Pyrrolidone-carboxylate peptidase from Staphylococcus aureus (strain NCTC 8325 / PS 47).